Reading from the N-terminus, the 241-residue chain is MTVLIIGMGNIGKKLVELGNFEKIYAYDRISKDIPGVVRLGEFQVPSDVSTVVECASPEAVKEYSLQILKSPVNYIIISTSAFADEVFRERFFSELKNSPARVFFPSGAIGGLDVLSSIKDFVETVRIETIKPPKSLGLDLKGKTVVFEGSVEEASKLFPRNINVASTIGLIVGFEKVKVTIVADPAMDHNIHIVRISSAIGNYEFKIENIPSPENPKTSMLTVYSILRALRNLESKIVFG.

The NAD(+) site is built by alanine 109 and asparagine 164. Residue histidine 193 is part of the active site.

This sequence belongs to the L-aspartate dehydrogenase family.

It catalyses the reaction L-aspartate + NADP(+) + H2O = oxaloacetate + NH4(+) + NADPH + H(+). The catalysed reaction is L-aspartate + NAD(+) + H2O = oxaloacetate + NH4(+) + NADH + H(+). It participates in cofactor biosynthesis; NAD(+) biosynthesis; iminoaspartate from L-aspartate (dehydrogenase route): step 1/1. Functionally, specifically catalyzes the NAD or NADP-dependent dehydrogenation of L-aspartate to iminoaspartate. The protein is L-aspartate dehydrogenase of Thermotoga sp. (strain RQ2).